A 371-amino-acid chain; its full sequence is uncharacterized protein (371 aa).

The 4Fe-4S ferredoxin-type domain occupies 110 to 140 (MEKFIDFDRCNKCGECARKICKAKWTPLNYL).

This is an uncharacterized protein from Methanocaldococcus jannaschii (strain ATCC 43067 / DSM 2661 / JAL-1 / JCM 10045 / NBRC 100440) (Methanococcus jannaschii).